Here is a 520-residue protein sequence, read N- to C-terminus: RING-type E3 ubiquitin-protein ligase PPIL2 (520 aa).

The region spanning 35-108 (RRLPFDHCSL…GKYHCPVLFT (74 aa)) is the U-box domain. Residues 197 to 217 (LKNTNAETRETLQELYKEFKG) are a coiled coil. Lys216 is covalently cross-linked (Glycyl lysine isopeptide (Lys-Gly) (interchain with G-Cter in SUMO2)). Positions 278–433 (KKGYVRLHTN…EEIRIDATTV (156 aa)) constitute a PPIase cyclophilin-type domain. The interval 456–520 (APETKVKSSQ…SRGFGDFSSW (65 aa)) is disordered. A compositionally biased stretch (low complexity) spans 463 to 474 (SSQPQAGSQGPQ). Ser470 is subject to Phosphoserine. The residue at position 482 (Lys482) is an N6-acetyllysine.

Belongs to the cyclophilin-type PPIase family. PPIL2 subfamily. As to quaternary structure, component of the minor spliceosome, which splices U12-type introns. Within this complex, interacts with PRPF8/PRP8, EFTUD2/SNU114 and PLRG1. Interacts with isoform 2 of BSG. Interacts (via the PPIase cyclophilin-type domain) with CRNKL1; they may form a trimeric complex with HSP90. Highest expression in thymus, pancreas and testis. Also detected in heart, placenta, lung, liver, skeletal muscle, kidney, spleen, prostate, ovary, small intestine and colon. Poorly detected in brain and leukocytes. Strong protein expression in lymph node (cortical, paracortical and medullar regions), thyroid (follicular epithelial cells), testis (developing spermatozoa), stomach (cells lining the gastric pit), pancreas, kidney (proximal and distal-tubule cells and collecting duct cells but not in glomeruli), endometrium and colon (goblet cells). Moderate protein expression in spleen, prostate (epithelium and squamous cell carcinomas), placenta and adrenal gland. Weak protein expression in liver, heart, breast, ovary, and lung. No protein expression in brain and bladder. High protein expression in most lymphomas and melanomas.

It is found in the nucleus. The catalysed reaction is S-ubiquitinyl-[E2 ubiquitin-conjugating enzyme]-L-cysteine + [acceptor protein]-L-lysine = [E2 ubiquitin-conjugating enzyme]-L-cysteine + N(6)-ubiquitinyl-[acceptor protein]-L-lysine.. Its pathway is protein modification; protein ubiquitination. Functionally, has a ubiquitin-protein ligase activity acting as an E3 ubiquitin protein ligase or as an ubiquitin-ubiquitin ligase promoting elongation of ubiquitin chains on substrates. By mediating 'Lys-48'-linked polyubiquitination of proteins could target them for proteasomal degradation. May also function as a chaperone, playing a role in transport to the cell membrane of BSG/Basigin for instance. Probable inactive PPIase with no peptidyl-prolyl cis-trans isomerase activity. As a component of the minor spliceosome, involved in the splicing of U12-type introns in pre-mRNAs. The polypeptide is RING-type E3 ubiquitin-protein ligase PPIL2 (Homo sapiens (Human)).